We begin with the raw amino-acid sequence, 215 residues long: Vesicle-trafficking protein SEC22b-B (215 aa).

At 1–190 the chain is on the cytoplasmic side; the sequence is MVLLTMIARL…RSDAKYLNTR (190 aa). Residues 6-119 enclose the Longin domain; sequence MIARLADGLP…YSFIEFDTYI (114 aa). The v-SNARE coiled-coil homology domain occupies 134 to 194; the sequence is NLSNINTELQ…KYLNTRSTYA (61 aa). The chain crosses the membrane as a helical span at residues 191–213; that stretch reads STYAKLAAGGVFFIMLIVYIRFW. Residues 214-215 lie on the Lumenal side of the membrane; the sequence is WL.

The protein belongs to the synaptobrevin family. As to quaternary structure, component of 2 distinct SNARE complexes.

It is found in the endoplasmic reticulum membrane. Its subcellular location is the endoplasmic reticulum-Golgi intermediate compartment membrane. The protein localises to the golgi apparatus. It localises to the cis-Golgi network membrane. The protein resides in the trans-Golgi network membrane. It is found in the melanosome. In terms of biological role, SNARE involved in targeting and fusion of ER-derived transport vesicles with the Golgi complex as well as Golgi-derived retrograde transport vesicles with the ER. In Danio rerio (Zebrafish), this protein is Vesicle-trafficking protein SEC22b-B.